A 348-amino-acid chain; its full sequence is UDP-glucose 4-epimerase (348 aa).

NAD(+)-binding positions include 12–14, 33–37, 66–67, Phe88, and Lys92; these read GYI, DNFHN, and DI. Residue 132 to 134 participates in substrate binding; sequence SAT. The active-site Proton acceptor is Tyr157. 2 residues coordinate NAD(+): Lys161 and Tyr185. Residues 185–187, 206–208, 224–226, Arg239, and 300–303 contribute to the substrate site; these read YFN, NNL, NVF, and REGD.

It belongs to the NAD(P)-dependent epimerase/dehydratase family. As to quaternary structure, homodimer. Requires NAD(+) as cofactor.

It catalyses the reaction UDP-alpha-D-glucose = UDP-alpha-D-galactose. It carries out the reaction UDP-N-acetyl-alpha-D-glucosamine = UDP-N-acetyl-alpha-D-galactosamine. The protein operates within carbohydrate metabolism; galactose metabolism. Functionally, catalyzes two distinct but analogous reactions: the reversible epimerization of UDP-glucose to UDP-galactose and the reversible epimerization of UDP-N-acetylglucosamine to UDP-N-acetylgalactosamine. The reaction with UDP-Gal plays a critical role in the Leloir pathway of galactose catabolism in which galactose is converted to the glycolytic intermediate glucose 6-phosphate. It contributes to the catabolism of dietary galactose and enables the endogenous biosynthesis of both UDP-Gal and UDP-GalNAc when exogenous sources are limited. Both UDP-sugar interconversions are important in the synthesis of glycoproteins and glycolipids. In Pongo abelii (Sumatran orangutan), this protein is UDP-glucose 4-epimerase (GALE).